The sequence spans 426 residues: D-tagatose-1,6-bisphosphate aldolase subunit KbaZ (426 aa).

The protein belongs to the GatZ/KbaZ family. KbaZ subfamily. In terms of assembly, forms a complex with KbaY.

It functions in the pathway carbohydrate metabolism; D-tagatose 6-phosphate degradation; D-glyceraldehyde 3-phosphate and glycerone phosphate from D-tagatose 6-phosphate: step 2/2. Component of the tagatose-1,6-bisphosphate aldolase KbaYZ that is required for full activity and stability of the Y subunit. Could have a chaperone-like function for the proper and stable folding of KbaY. When expressed alone, KbaZ does not show any aldolase activity. This Escherichia coli O81 (strain ED1a) protein is D-tagatose-1,6-bisphosphate aldolase subunit KbaZ.